The following is a 77-amino-acid chain: Translation initiation factor IF-1, chloroplastic (77 aa).

Positions 1 to 71 (MKEQKLIHEG…TRGRIIYRLR (71 aa)) constitute an S1-like domain.

It belongs to the IF-1 family. As to quaternary structure, component of the 30S ribosomal translation pre-initiation complex which assembles on the 30S ribosome in the order IF-2 and IF-3, IF-1 and N-formylmethionyl-tRNA(fMet); mRNA recruitment can occur at any time during PIC assembly.

The protein resides in the plastid. The protein localises to the chloroplast. Its function is as follows. One of the essential components for the initiation of protein synthesis. Stabilizes the binding of IF-2 and IF-3 on the 30S subunit to which N-formylmethionyl-tRNA(fMet) subsequently binds. Helps modulate mRNA selection, yielding the 30S pre-initiation complex (PIC). Upon addition of the 50S ribosomal subunit IF-1, IF-2 and IF-3 are released leaving the mature 70S translation initiation complex. The polypeptide is Translation initiation factor IF-1, chloroplastic (Asarum canadense (Wild ginger)).